An 883-amino-acid polypeptide reads, in one-letter code: Valine--tRNA ligase (883 aa).

A 'HIGH' region motif is present at residues Pro46–His56. The 'KMSKS' region motif lies at Lys520–Ser524. Lys523 lines the ATP pocket. The stretch at Leu809–Lys883 forms a coiled coil.

Belongs to the class-I aminoacyl-tRNA synthetase family. ValS type 1 subfamily. As to quaternary structure, monomer.

Its subcellular location is the cytoplasm. It carries out the reaction tRNA(Val) + L-valine + ATP = L-valyl-tRNA(Val) + AMP + diphosphate. Catalyzes the attachment of valine to tRNA(Val). As ValRS can inadvertently accommodate and process structurally similar amino acids such as threonine, to avoid such errors, it has a 'posttransfer' editing activity that hydrolyzes mischarged Thr-tRNA(Val) in a tRNA-dependent manner. In Streptococcus pneumoniae serotype 4 (strain ATCC BAA-334 / TIGR4), this protein is Valine--tRNA ligase.